Consider the following 284-residue polypeptide: ATP phosphoribosyltransferase (284 aa).

This sequence belongs to the ATP phosphoribosyltransferase family. Long subfamily. Mg(2+) is required as a cofactor.

The protein resides in the cytoplasm. The catalysed reaction is 1-(5-phospho-beta-D-ribosyl)-ATP + diphosphate = 5-phospho-alpha-D-ribose 1-diphosphate + ATP. Its pathway is amino-acid biosynthesis; L-histidine biosynthesis; L-histidine from 5-phospho-alpha-D-ribose 1-diphosphate: step 1/9. Its activity is regulated as follows. Feedback inhibited by histidine. Functionally, catalyzes the condensation of ATP and 5-phosphoribose 1-diphosphate to form N'-(5'-phosphoribosyl)-ATP (PR-ATP). Has a crucial role in the pathway because the rate of histidine biosynthesis seems to be controlled primarily by regulation of HisG enzymatic activity. The protein is ATP phosphoribosyltransferase of Corynebacterium kroppenstedtii (strain DSM 44385 / JCM 11950 / CIP 105744 / CCUG 35717).